The chain runs to 438 residues: MKVAVIGAGLAGSEAAYKIAQAGYKVDLYEMRPEKQTPAHKTPYFAEIVCSNSFGSESLTSGAGLLKKEMEVLGSIILDVAKEFKVPAGQAFAVDREKFSKKLTEILENHPNINVIRQEVKTLPDADIIVIATGPLTSEEFSKEIQKITGSEYLYFYDAIAPVVDASTVDFSKGFWADRYGKGTGDYFNCVLSEQEYEIFYQELLKGEQVPLKDFERAVYFEGCLPIEEIARRGKETLLYGPMKPVGLIDPKTGKRPYAVVQLRKENIEGTLLSLVGFQTKLKYPEQKRIFSLIPALKDAEFVKLGSIHRNTFIQSQKLLKPTLQLRKKPNILFAGQITGVEGYMASAATGIIAGINVARMLEGKEPVVPPKTTMIGGLINYITTAKNELQPMGPNYALLPELEEKIKGKEERKLKKAEIALKDIKEWTKEIESAVFI.

FAD is bound at residue 7 to 12; that stretch reads GAGLAG.

The protein belongs to the MnmG family. TrmFO subfamily. FAD is required as a cofactor.

The protein localises to the cytoplasm. It catalyses the reaction uridine(54) in tRNA + (6R)-5,10-methylene-5,6,7,8-tetrahydrofolate + NADH + H(+) = 5-methyluridine(54) in tRNA + (6S)-5,6,7,8-tetrahydrofolate + NAD(+). The catalysed reaction is uridine(54) in tRNA + (6R)-5,10-methylene-5,6,7,8-tetrahydrofolate + NADPH + H(+) = 5-methyluridine(54) in tRNA + (6S)-5,6,7,8-tetrahydrofolate + NADP(+). Functionally, catalyzes the folate-dependent formation of 5-methyl-uridine at position 54 (M-5-U54) in all tRNAs. In Sulfurihydrogenibium sp. (strain YO3AOP1), this protein is Methylenetetrahydrofolate--tRNA-(uracil-5-)-methyltransferase TrmFO.